The sequence spans 98 residues: NADH-ubiquinone oxidoreductase chain 4L (98 aa).

3 helical membrane-spanning segments follow: residues 2–22 (PSIS…MLVF), 29–49 (SLLC…LFIM), and 61–81 (ILLL…LVMV).

Belongs to the complex I subunit 4L family. In terms of assembly, core subunit of respiratory chain NADH dehydrogenase (Complex I) which is composed of 45 different subunits.

It localises to the mitochondrion inner membrane. It catalyses the reaction a ubiquinone + NADH + 5 H(+)(in) = a ubiquinol + NAD(+) + 4 H(+)(out). Its function is as follows. Core subunit of the mitochondrial membrane respiratory chain NADH dehydrogenase (Complex I) which catalyzes electron transfer from NADH through the respiratory chain, using ubiquinone as an electron acceptor. Part of the enzyme membrane arm which is embedded in the lipid bilayer and involved in proton translocation. The polypeptide is NADH-ubiquinone oxidoreductase chain 4L (MT-ND4L) (Lepilemur sahamalazensis (Sahamalaza sportive lemur)).